A 315-amino-acid polypeptide reads, in one-letter code: Zinc finger CCCH domain-containing protein 23 (315 aa).

The segment at Met1–Gln21 is disordered. 2 C3H1-type zinc fingers span residues Tyr131 to Phe157 and Arg165 to Glu189.

The chain is Zinc finger CCCH domain-containing protein 23 from Arabidopsis thaliana (Mouse-ear cress).